Consider the following 270-residue polypeptide: 3-methyl-2-oxobutanoate hydroxymethyltransferase (270 aa).

Mg(2+) is bound by residues Asp-42 and Asp-86. Residues 42–43 (DS), Asp-86, and Lys-116 contribute to the 3-methyl-2-oxobutanoate site. Glu-118 lines the Mg(2+) pocket. Catalysis depends on Glu-185, which acts as the Proton acceptor.

This sequence belongs to the PanB family. As to quaternary structure, homodecamer; pentamer of dimers. It depends on Mg(2+) as a cofactor.

It localises to the cytoplasm. The catalysed reaction is 3-methyl-2-oxobutanoate + (6R)-5,10-methylene-5,6,7,8-tetrahydrofolate + H2O = 2-dehydropantoate + (6S)-5,6,7,8-tetrahydrofolate. The protein operates within cofactor biosynthesis; (R)-pantothenate biosynthesis; (R)-pantoate from 3-methyl-2-oxobutanoate: step 1/2. Its function is as follows. Catalyzes the reversible reaction in which hydroxymethyl group from 5,10-methylenetetrahydrofolate is transferred onto alpha-ketoisovalerate to form ketopantoate. This chain is 3-methyl-2-oxobutanoate hydroxymethyltransferase, found in Synechococcus sp. (strain CC9902).